The sequence spans 547 residues: Varicidin biosynthesis cluster MFS-type transporer (547 aa).

The segment covering 1–17 (MTTSTSKNAISKSSQED) has biased composition (polar residues). Residues 1 to 33 (MTTSTSKNAISKSSQEDLCSDTKDKGSSGGGNE) form a disordered region. Helical transmembrane passes span 47 to 67 (LVLLFVGLALSVFCLSLVCIS), 156 to 176 (LAPSLLLPGLCPCIVAQSVFT), 183 to 203 (WCFWINLPLGGVTAVAVFLFV), 224 to 244 (ALGTCILMPLIICLLLALQWG), 252 to 272 (SWRVVLCLVLFTVLLVAWLYV), 296 to 316 (ILFTFGINGSMFIIVYYVPIW), 330 to 350 (INFLACSGSMSVAAIIAGTLV), 360 to 382 (GQWRIFNYTTLVSIATGLIWRYN), 392 to 412 (AGTLVMFGFGAGSGMQMPFIA), 422 to 442 (ISLGSSLIILIQTMGGAVFLA), and 503 to 523 (CFLVCIVLACLTIIADAGMEW).

It belongs to the major facilitator superfamily. TCR/Tet family.

It localises to the cell membrane. MFS-type transporer; part of the gene cluster that mediates the biosynthesis of varicidin A, an antifungal natural product containing a cis-octahydrodecalin core. The protein is Varicidin biosynthesis cluster MFS-type transporer of Talaromyces variabilis (Penicillium variabile).